The following is a 108-amino-acid chain: MLKGNLAGLMKQAQQMQENMKKMQEQLALIEVEGQSGAGLVKVTMTCRNEVRRVSIDPSLLADDKDMLEDLVAAAFNDAVRKAEATSQEKMSGMTSGLPLPPGFKLPF.

A compositionally biased stretch (polar residues) spans 85–95; the sequence is ATSQEKMSGMT. The segment at 85 to 108 is disordered; it reads ATSQEKMSGMTSGLPLPPGFKLPF. A compositionally biased stretch (pro residues) spans 99 to 108; it reads PLPPGFKLPF.

The protein belongs to the YbaB/EbfC family. Homodimer.

Its subcellular location is the cytoplasm. The protein localises to the nucleoid. Binds to DNA and alters its conformation. May be involved in regulation of gene expression, nucleoid organization and DNA protection. This Burkholderia orbicola (strain AU 1054) protein is Nucleoid-associated protein Bcen_6253.